Reading from the N-terminus, the 153-residue chain is Large-conductance mechanosensitive channel (153 aa).

2 consecutive transmembrane segments (helical) span residues 16–36 (VIDL…VKSL) and 88–108 (GLFI…FMLV).

It belongs to the MscL family. Homopentamer.

Its subcellular location is the cell inner membrane. In terms of biological role, channel that opens in response to stretch forces in the membrane lipid bilayer. May participate in the regulation of osmotic pressure changes within the cell. The sequence is that of Large-conductance mechanosensitive channel from Chromobacterium violaceum (strain ATCC 12472 / DSM 30191 / JCM 1249 / CCUG 213 / NBRC 12614 / NCIMB 9131 / NCTC 9757 / MK).